The sequence spans 807 residues: Glycerol-3-phosphate acyltransferase (807 aa).

Residues 308-313 (CHRSHM) carry the HXXXXD motif motif.

Belongs to the GPAT/DAPAT family.

Its subcellular location is the cell inner membrane. The enzyme catalyses sn-glycerol 3-phosphate + an acyl-CoA = a 1-acyl-sn-glycero-3-phosphate + CoA. It participates in phospholipid metabolism; CDP-diacylglycerol biosynthesis; CDP-diacylglycerol from sn-glycerol 3-phosphate: step 1/3. This chain is Glycerol-3-phosphate acyltransferase, found in Shewanella sp. (strain MR-4).